Here is a 296-residue protein sequence, read N- to C-terminus: MPLSGTPAPNKRRKSSKLIMELTGGGRESSGLNLGKKISVPRDVMLEELSLLTNRGSKMFKLRQMRVEKFIYENHPDVFSDSSMDHFQKFLPTVGGQLETAGQGFSYGKGSSGGQAGSSGSAGQYGSDRHQQGSGFGAGGSGGPGGQAGGGGAPGTVGLGEPGSGDQAGGDGKHVTVFKTYISPWDRAMGVDPQQKVELGIDLLAYGAKAELPKYKSFNRTAMPYGGYEKASKRMTFQMPKFDLGPLLSEPLVLYNQNLSNRPSFNRTPIPWLSSGEHVDYNVDVGIPLDGETEEL.

A Phosphoserine modification is found at S82. 2 stretches are compositionally biased toward gly residues: residues 105–117 (FSYG…GQAG) and 134–170 (SGFG…QAGG). The disordered stretch occupies residues 105–172 (FSYGKGSSGG…GSGDQAGGDG (68 aa)).

This sequence belongs to the myozenin family. As to quaternary structure, interacts with ACTN2, ACTN3, FLNA, FLNB, FLNC, LDB3, PPP3CA and TCAP. Interacts via its C-terminal region with MYOT. In terms of tissue distribution, expressed primarily in skeletal muscle and specifically enriched in the gastrocnemius, which is composed predominantly of fast-twitch muscle fibers. Detected at lower levels in heart.

The protein localises to the nucleus. It is found in the cell projection. The protein resides in the pseudopodium. Its function is as follows. Myozenins may serve as intracellular binding proteins involved in linking Z-disk proteins such as alpha-actinin, gamma-filamin, TCAP/telethonin, LDB3/ZASP and localizing calcineurin signaling to the sarcomere. Plays an important role in the modulation of calcineurin signaling. May play a role in myofibrillogenesis. The protein is Myozenin-1 of Mus musculus (Mouse).